We begin with the raw amino-acid sequence, 130 residues long: UPF0212 protein PF1486 (130 aa).

The protein belongs to the UPF0212 family.

The protein is UPF0212 protein PF1486 of Pyrococcus furiosus (strain ATCC 43587 / DSM 3638 / JCM 8422 / Vc1).